The sequence spans 298 residues: Cell wall protein DAN1 (298 aa).

An N-terminal signal peptide occupies residues 1-19 (MSRISILAVAAALVASATA). The tract at residues 122–168 (PASTTEASSTSTSEASSAATESSSSSESSAETSSNAASTQATVSSES) is disordered. Residue Asn-275 is the site of GPI-anchor amidated asparagine attachment. The propeptide at 276–298 (GANKFNNGVFGAAAIAGAAALLL) is removed in mature form.

The protein belongs to the SRP1/TIP1 family. Post-translationally, extensively O-glycosylated. In terms of processing, the GPI-anchor is attached to the protein in the endoplasmic reticulum and serves to target the protein to the cell surface. There, the glucosamine-inositol phospholipid moiety is cleaved off and the GPI-modified mannoprotein is covalently attached via its lipidless GPI glycan remnant to the 1,6-beta-glucan of the outer cell wall layer.

It localises to the secreted. It is found in the cell wall. The protein resides in the membrane. Its function is as follows. Component of the cell wall. The sequence is that of Cell wall protein DAN1 (DAN1) from Saccharomyces cerevisiae (strain ATCC 204508 / S288c) (Baker's yeast).